The chain runs to 152 residues: uncharacterized protein (152 aa).

Positions Met-1–Ala-23 are cleaved as a signal peptide.

It belongs to the asfivirus EP152R family.

It is found in the virion. This is an uncharacterized protein from Ornithodoros (relapsing fever ticks).